The primary structure comprises 148 residues: Single-stranded DNA-binding protein 2 (148 aa).

In terms of domain architecture, SSB spans 6-108; the sequence is MNHITVSGLV…IEAESFGHDL (103 aa).

In terms of assembly, homotetramer.

The polypeptide is Single-stranded DNA-binding protein 2 (ssb2) (Tropheryma whipplei (strain TW08/27) (Whipple's bacillus)).